Here is a 126-residue protein sequence, read N- to C-terminus: Glycine cleavage system H protein (126 aa).

The Lipoyl-binding domain occupies 22-104 (KAYIGITSFA…YEQAWMIVVE (83 aa)). Lys63 is modified (N6-lipoyllysine).

The protein belongs to the GcvH family. The glycine cleavage system is composed of four proteins: P, T, L and H. It depends on (R)-lipoate as a cofactor.

The glycine cleavage system catalyzes the degradation of glycine. The H protein shuttles the methylamine group of glycine from the P protein to the T protein. Its function is as follows. Is also involved in protein lipoylation via its role as an octanoyl/lipoyl carrier protein intermediate. This chain is Glycine cleavage system H protein, found in Brevibacillus brevis (strain 47 / JCM 6285 / NBRC 100599).